The following is a 142-amino-acid chain: MVLSAADKGNVKAAWGKVGGHAAEYGAEALERMFLSFPTTKTYFPHFDLSHGSAQVKGHGAKVAAALTKAVGHLDDLPGALSELSDLHAHKLRVDPVNFKLLSHSLLVTLASHLPNDFTPAVHASLDKFLANVSTVLTSKYR.

In terms of domain architecture, Globin spans 2–142 (VLSAADKGNV…VSTVLTSKYR (141 aa)). A Phosphoserine modification is found at Ser4. An N6-succinyllysine mark is found at Lys8 and Lys12. N6-acetyllysine; alternate is present on Lys17. At Lys17 the chain carries N6-succinyllysine; alternate. Phosphotyrosine is present on Tyr25. A Phosphoserine modification is found at Ser36. Lys41 bears the N6-succinyllysine mark. The residue at position 50 (Ser50) is a Phosphoserine. Position 59 (His59) interacts with O2. A heme b-binding site is contributed by His88. Ser103 is modified (phosphoserine). Phosphothreonine is present on Thr109. Ser125 carries the phosphoserine modification. A phosphothreonine mark is found at Thr135 and Thr138. A Phosphoserine modification is found at Ser139.

This sequence belongs to the globin family. Heterotetramer of two alpha chains and two beta chains. In terms of tissue distribution, red blood cells.

Functionally, involved in oxygen transport from the lung to the various peripheral tissues. This Bison bonasus (European bison) protein is Hemoglobin subunit alpha-I/II.